The following is a 470-amino-acid chain: Probable citrate synthase, mitochondrial (470 aa).

Catalysis depends on residues His-297, His-351, and Asp-406.

The protein belongs to the citrate synthase family. As to quaternary structure, homodimer.

The protein resides in the mitochondrion matrix. It catalyses the reaction oxaloacetate + acetyl-CoA + H2O = citrate + CoA + H(+). The protein operates within carbohydrate metabolism; tricarboxylic acid cycle; isocitrate from oxaloacetate: step 1/2. The protein is Probable citrate synthase, mitochondrial of Leishmania braziliensis.